Reading from the N-terminus, the 328-residue chain is ABC transporter I family member 20 (328 aa).

Positions 14–257 (VEISGLRFTY…SKKSLMRTVE (244 aa)) constitute an ABC transporter domain. 55-62 (GSNGAGKT) provides a ligand contact to ATP. The tract at residues 263 to 295 (ERDEERKRRKERKANGLPEFETRTEESRVTGDP) is disordered. Over residues 282–291 (FETRTEESRV) the composition is skewed to basic and acidic residues.

The protein belongs to the ABC transporter superfamily. ABCI family.

It is found in the cytoplasm. The protein is ABC transporter I family member 20 (ABCI20) of Arabidopsis thaliana (Mouse-ear cress).